Consider the following 169-residue polypeptide: Large ribosomal subunit protein uL5 (169 aa).

Belongs to the universal ribosomal protein uL5 family. In terms of assembly, part of the 50S ribosomal subunit; contacts the 5S rRNA and probably tRNA. Forms a bridge to the 30S subunit in the 70S ribosome.

This is one of the proteins that bind and probably mediate the attachment of the 5S RNA into the large ribosomal subunit, where it forms part of the central protuberance. In the 70S ribosome it contacts protein S13 of the 30S subunit (bridge B1b), connecting the 2 subunits; this bridge is implicated in subunit movement. May contact the P site tRNA; the 5S rRNA and some of its associated proteins might help stabilize positioning of ribosome-bound tRNAs. The protein is Large ribosomal subunit protein uL5 of Methanosarcina barkeri (strain Fusaro / DSM 804).